The chain runs to 780 residues: ATP-dependent 6-phosphofructokinase, muscle type (780 aa).

T2 bears the N-acetylthreonine mark. The segment at T2 to H390 is N-terminal catalytic PFK domain 1. ATP is bound by residues G25, R88–C89, and G118–S121. Residue D119 participates in Mg(2+) binding. Position 133 is a phosphoserine (S133). Substrate is bound by residues S164–D166, R201, M208–R210, E264, R292, and H298–R301. The active-site Proton acceptor is the D166. The residue at position 377 (S377) is a Phosphoserine. The tract at residues V391–H401 is interdomain linker. Positions T402 to V780 are C-terminal regulatory PFK domain 2. Residues R471 and T528 to N532 each bind beta-D-fructose 2,6-bisphosphate. O-linked (GlcNAc) serine glycosylation is present at S530. K557 is modified (N6-(2-hydroxyisobutyryl)lysine). Residues R566, M573–G575, E629, R655, and H661–Q664 contribute to the beta-D-fructose 2,6-bisphosphate site. At S667 the chain carries Phosphoserine. Position 735 (R735) interacts with beta-D-fructose 2,6-bisphosphate. The residue at position 775 (S775) is a Phosphoserine.

It belongs to the phosphofructokinase type A (PFKA) family. ATP-dependent PFK group I subfamily. Eukaryotic two domain clade 'E' sub-subfamily. Homo- and heterotetramers. Phosphofructokinase (PFK) enzyme functions as a tetramer composed of different combinations of 3 types of subunits, called PFKM (M), PFKL (L) and PFKP (P). The composition of the PFK tetramer differs according to the tissue type it is present in. The kinetic and regulatory properties of the tetrameric enzyme are dependent on the subunit composition, hence can vary across tissues. Interacts (via C-terminus) with HK1 (via N-terminal spermatogenic cell-specific region). Mg(2+) serves as cofactor. In terms of processing, glcNAcylation decreases enzyme activity.

Its subcellular location is the cytoplasm. The enzyme catalyses beta-D-fructose 6-phosphate + ATP = beta-D-fructose 1,6-bisphosphate + ADP + H(+). It participates in carbohydrate degradation; glycolysis; D-glyceraldehyde 3-phosphate and glycerone phosphate from D-glucose: step 3/4. Its activity is regulated as follows. Allosterically activated by ADP, AMP, or fructose 2,6-bisphosphate, and allosterically inhibited by ATP or citrate. Functionally, catalyzes the phosphorylation of D-fructose 6-phosphate to fructose 1,6-bisphosphate by ATP, the first committing step of glycolysis. The protein is ATP-dependent 6-phosphofructokinase, muscle type (PFKM) of Pongo abelii (Sumatran orangutan).